A 112-amino-acid chain; its full sequence is DNA-directed RNA polymerase subunit Rpo11 (112 aa).

This sequence belongs to the archaeal Rpo11/eukaryotic RPB11/RPC19 RNA polymerase subunit family. As to quaternary structure, part of the RNA polymerase complex.

Its subcellular location is the cytoplasm. The catalysed reaction is RNA(n) + a ribonucleoside 5'-triphosphate = RNA(n+1) + diphosphate. DNA-dependent RNA polymerase (RNAP) catalyzes the transcription of DNA into RNA using the four ribonucleoside triphosphates as substrates. This is DNA-directed RNA polymerase subunit Rpo11 from Methanopyrus kandleri (strain AV19 / DSM 6324 / JCM 9639 / NBRC 100938).